The chain runs to 991 residues: Receptor-like protein kinase HAIKU2 (991 aa).

The first 19 residues, 1–19, serve as a signal peptide directing secretion; sequence MLRLLFIVRLLFLMPLASS. Residues 20–616 lie on the Extracellular side of the membrane; that stretch reads RSNHSEEVEN…KRKHLSKVDM (597 aa). An N-linked (GlcNAc...) asparagine glycan is attached at N22. 21 LRR repeats span residues 66 to 90, 99 to 123, 125 to 148, 150 to 170, 171 to 196, 197 to 220, 221 to 244, 246 to 267, 269 to 291, 292 to 314, 315 to 339, 341 to 363, 365 to 387, 388 to 411, 413 to 435, 436 to 459, 461 to 482, 483 to 508, 510 to 531, 532 to 554, and 555 to 578; these read DGNVVEINLGSRSLINRDDDGRFTD, LKLLEKLVLGNNSLRGQIGTNLGKC, RLRYLDLGINNFSGEFPAIDSLQL, EFLSLNASGISGIFPWSSLKD, LKRLSFLSVGDNRFGSHPFPREILNL, TALQWVYLSNSSITGKIPEGIKNL, VRLQNLELSDNQISGEIPKEIVQL, NLRQLEIYSNDLTGKLPLGFRN, TNLRNFDASNNSLEGDLSELRFL, KNLVSLGMFENRLTGEIPKEFGD, FKSLAALSLYRNQLTGKLPRRLGSW, AFKYIDVSENFLEGQIPPYMCKK, VMTHLLMLQNRFTGQFPESYAKC, KTLIRLRVSNNSLSGMIPSGIWGL, NLQFLDLASNYFEGNLTGDIGNA, KSLGSLDLSNNRFSGSLPFQISGA, SLVSVNLRMNKFSGIVPESFGK, LKELSSLILDQNNLSGAIPKSLGLCT, LVDLNFAGNSLSEEIPESLGSL, KLLNSLNLSGNKLSGMIPVGLSA, and LKLSLLDLSNNQLTGSVPESLVSG. N-linked (GlcNAc...) asparagine glycans are attached at residues N109, N135, N155, N195, and N206. N-linked (GlcNAc...) asparagine glycans are attached at residues N267 and N278. Residues N397 and N427 are each glycosylated (N-linked (GlcNAc...) asparagine). A glycan (N-linked (GlcNAc...) asparagine) is linked at N495. N538 carries an N-linked (GlcNAc...) asparagine glycan. The helical transmembrane segment at 617–637 threads the bilayer; sequence CFIVAAILALFFLFSYVIFKI. Topologically, residues 638–991 are cytoplasmic; that stretch reads RRDKLNKTVQ…SANDEITKVV (354 aa). The Protein kinase domain occupies 671 to 970; that stretch reads IKSENIIGRG…SMLEKIEPSY (300 aa). ATP-binding positions include 677–685 and K699; that span reads IGRGGQGNV. Phosphotyrosine is present on residues Y762 and Y801. D814 functions as the Proton acceptor in the catalytic mechanism. Residues Y859 and Y866 each carry the phosphotyrosine modification. Phosphothreonine is present on T867. The disordered stretch occupies residues 972 to 991; sequence KNSGEASYGESANDEITKVV.

This sequence belongs to the protein kinase superfamily. Ser/Thr protein kinase family. As to expression, expressed in the endosperm of fertilized ovules.

The protein resides in the membrane. The enzyme catalyses L-seryl-[protein] + ATP = O-phospho-L-seryl-[protein] + ADP + H(+). It carries out the reaction L-threonyl-[protein] + ATP = O-phospho-L-threonyl-[protein] + ADP + H(+). Its function is as follows. Modulates the seed size by negatively regulating the cellularization of syncytial endosperm. The polypeptide is Receptor-like protein kinase HAIKU2 (IKU2) (Arabidopsis thaliana (Mouse-ear cress)).